The primary structure comprises 427 residues: Glutamate-1-semialdehyde 2,1-aminomutase (427 aa).

N6-(pyridoxal phosphate)lysine is present on K267.

The protein belongs to the class-III pyridoxal-phosphate-dependent aminotransferase family. HemL subfamily. In terms of assembly, homodimer. Requires pyridoxal 5'-phosphate as cofactor.

It localises to the cytoplasm. It catalyses the reaction (S)-4-amino-5-oxopentanoate = 5-aminolevulinate. Its pathway is porphyrin-containing compound metabolism; protoporphyrin-IX biosynthesis; 5-aminolevulinate from L-glutamyl-tRNA(Glu): step 2/2. The sequence is that of Glutamate-1-semialdehyde 2,1-aminomutase from Citrifermentans bemidjiense (strain ATCC BAA-1014 / DSM 16622 / JCM 12645 / Bem) (Geobacter bemidjiensis).